The following is a 1190-amino-acid chain: Plakophilin-4 (1190 aa).

The interval 1–32 is disordered; sequence MPAPEQGSLVEEGQPQTHQEAVSTGPGMEPET. The stretch at 36–63 forms a coiled coil; the sequence is TILASVKEQELQFQRLTRELEVERQIVA. The tract at residues 73 to 347 is disordered; that stretch reads AESPSIASTS…KRSGMTAVPQ (275 aa). Ser-75 bears the Phosphoserine mark. The span at 77–86 shows a compositional bias: polar residues; the sequence is SIASTSSTEK. Thr-84 carries the post-translational modification Phosphothreonine. Phosphoserine occurs at positions 106, 132, 136, and 139. Polar residues-rich tracts occupy residues 138–156, 163–203, and 213–229; these read GSLG…SDSG, FHNS…QPSV, and SVPS…STGV. 3 positions are modified to phosphoserine: Ser-220, Ser-230, and Ser-235. Low complexity predominate over residues 230–241; that stretch reads SPSRGSLRTSLG. The span at 247-266 shows a compositional bias: polar residues; the sequence is PSVTDSRPLNPSAYSSSTLP. An omega-N-methylarginine mark is found at Arg-253 and Arg-269. 5 positions are modified to phosphoserine: Ser-272, Ser-280, Ser-313, Ser-326, and Ser-336. Polar residues predominate over residues 289–323; the sequence is SVTSRQTSNPNGPVPQYQTTTRVGSPLTLTDAQTR. Positions 324–337 are enriched in low complexity; that stretch reads VASPSQGQVGSSSP. The residue at position 371 (Tyr-371) is a Phosphotyrosine. Ser-391, Ser-402, and Ser-405 each carry phosphoserine. Thr-411 carries the phosphothreonine modification. Tyr-414 is subject to Phosphotyrosine. Ser-421, Ser-426, and Ser-437 each carry phosphoserine. Tyr-477 is subject to Phosphotyrosine. Phosphoserine is present on residues Ser-509, Ser-511, and Ser-514. ARM repeat units follow at residues 517–556, 559–598, and 603–643; these read KDPR…HLCF, NKVK…NLVF, and DENK…NLSS. The span at 772-781 shows a compositional bias: basic and acidic residues; it reads GKESPSKDSE. The tract at residues 772–809 is disordered; sequence GKESPSKDSEPSCWGKKKKKKKRTPQEDQWDGVGPIPG. Position 775 is a phosphoserine (Ser-775). The ARM 4 repeat unit spans residues 861–900; the sequence is AYIRAAVRKEKGLPILVELLRMDNDRVVSSVATALRNMAL. Phosphothreonine is present on residues Thr-1012 and Thr-1016. Ser-1044, Ser-1090, Ser-1099, and Ser-1133 each carry phosphoserine.

This sequence belongs to the beta-catenin family. In terms of assembly, interacts (via the C-terminus) with FRMPD2 (via the PDZ 2 domain). Interacts with PDZD2. Interacts with RHOA; the interaction is detected at the midbody. Interacts with ECT2; the interaction is detected at the midbody. Interacts with CCDC85B.

The protein localises to the cell junction. The protein resides in the desmosome. It localises to the cytoplasm. Its subcellular location is the cytoskeleton. It is found in the spindle. The protein localises to the spindle pole. The protein resides in the midbody. It localises to the cell membrane. Functionally, plays a role as a regulator of Rho activity during cytokinesis. May play a role in junctional plaques. This is Plakophilin-4 (Pkp4) from Mus musculus (Mouse).